The chain runs to 476 residues: Ubiquinone biosynthesis monooxygenase COQ6, mitochondrial (476 aa).

A mitochondrion-targeting transit peptide spans 1 to 35 (MAARIGSMAGLLCVRWWSSAQLAARGGPLVASQRW). N6-succinyllysine is present on lysine 219.

This sequence belongs to the UbiH/COQ6 family. As to quaternary structure, component of a multi-subunit COQ enzyme complex, composed of at least COQ3, COQ4, COQ5, COQ6, COQ7 and COQ9. Interacts with COQ8B and COQ7. The cofactor is FAD. In terms of tissue distribution, expressed in the kidney, in podocytes.

It localises to the mitochondrion inner membrane. The protein localises to the golgi apparatus. Its subcellular location is the cell projection. It carries out the reaction 4-hydroxy-3-(all-trans-decaprenyl)benzoate + 2 reduced [2Fe-2S]-[ferredoxin] + O2 + 2 H(+) = 3,4-dihydroxy-5-(all-trans-decaprenyl)benzoate + 2 oxidized [2Fe-2S]-[ferredoxin] + H2O. The catalysed reaction is 2-methoxy-6-(all-trans-decaprenyl)phenol + 2 reduced [2Fe-2S]-[ferredoxin] + O2 + 2 H(+) = 2-methoxy-6-(all-trans-decaprenyl)benzene-1,4-diol + 2 oxidized [2Fe-2S]-[ferredoxin] + H2O. It functions in the pathway cofactor biosynthesis; ubiquinone biosynthesis. Its function is as follows. FAD-dependent monooxygenase required for two non-consecutive steps during ubiquinone biosynthesis. Required for the C5-ring hydroxylation during ubiquinone biosynthesis by catalyzing the hydroxylation of 4-hydroxy-3-(all-trans-decaprenyl)benzoic acid to 3,4-dihydroxy-5-(all-trans-decaprenyl)benzoic acid. Also acts downstream of COQ4, for the C1-hydroxylation during ubiquinone biosynthesis by catalyzing the hydroxylation of 2-methoxy-6-(all-trans-decaprenyl)phenol to 2-methoxy-6-(all-trans-decaprenyl)benzene-1,4-diol. The electrons required for the hydroxylation reaction are funneled indirectly to COQ6 from NADPH via a ferredoxin/ferredoxin reductase system composed of FDX2 and FDXR. The protein is Ubiquinone biosynthesis monooxygenase COQ6, mitochondrial of Mus musculus (Mouse).